The following is a 359-amino-acid chain: 3-dehydroquinate synthase (359 aa).

NAD(+) contacts are provided by residues 69–74 (DGEAYK), 103–107 (GVIGD), 127–128 (TT), K140, K149, and 167–170 (CLKT). Zn(2+) contacts are provided by E182, H245, and H262.

Belongs to the sugar phosphate cyclases superfamily. Dehydroquinate synthase family. Requires Co(2+) as cofactor. The cofactor is Zn(2+). NAD(+) serves as cofactor.

It localises to the cytoplasm. It carries out the reaction 7-phospho-2-dehydro-3-deoxy-D-arabino-heptonate = 3-dehydroquinate + phosphate. It functions in the pathway metabolic intermediate biosynthesis; chorismate biosynthesis; chorismate from D-erythrose 4-phosphate and phosphoenolpyruvate: step 2/7. Functionally, catalyzes the conversion of 3-deoxy-D-arabino-heptulosonate 7-phosphate (DAHP) to dehydroquinate (DHQ). The polypeptide is 3-dehydroquinate synthase (Aeromonas salmonicida (strain A449)).